The chain runs to 272 residues: Phosphate import ATP-binding protein PstB (272 aa).

The 240-residue stretch at 18-257 (VSIQNATISY…FNDTDKIFNA (240 aa)) folds into the ABC transporter domain. 50 to 57 (GPSGCGKS) is a binding site for ATP.

This sequence belongs to the ABC transporter superfamily. Phosphate importer (TC 3.A.1.7) family. In terms of assembly, the complex is composed of two ATP-binding proteins (PstB), two transmembrane proteins (PstC and PstA) and a solute-binding protein (PstS).

The protein resides in the cell inner membrane. It carries out the reaction phosphate(out) + ATP + H2O = ADP + 2 phosphate(in) + H(+). Part of the ABC transporter complex PstSACB involved in phosphate import. Responsible for energy coupling to the transport system. The polypeptide is Phosphate import ATP-binding protein PstB (Synechococcus sp. (strain CC9311)).